Consider the following 230-residue polypeptide: Orotate phosphoribosyltransferase (230 aa).

Residues Arg107, Lys108, Lys111, His113, and 133–141 (EDLTTAGGS) contribute to the 5-phospho-alpha-D-ribose 1-diphosphate site. Residue Thr137 coordinates orotate.

It belongs to the purine/pyrimidine phosphoribosyltransferase family. PyrE subfamily. In terms of assembly, homodimer. Mg(2+) serves as cofactor.

It carries out the reaction orotidine 5'-phosphate + diphosphate = orotate + 5-phospho-alpha-D-ribose 1-diphosphate. Its pathway is pyrimidine metabolism; UMP biosynthesis via de novo pathway; UMP from orotate: step 1/2. In terms of biological role, catalyzes the transfer of a ribosyl phosphate group from 5-phosphoribose 1-diphosphate to orotate, leading to the formation of orotidine monophosphate (OMP). The chain is Orotate phosphoribosyltransferase from Allorhizobium ampelinum (strain ATCC BAA-846 / DSM 112012 / S4) (Agrobacterium vitis (strain S4)).